Here is a 674-residue protein sequence, read N- to C-terminus: uncharacterized protein (674 aa).

Positions 1 to 24 (MKTLKALKIFIIVYISSVSLESFA) are cleaved as a signal peptide. The next 2 helical transmembrane spans lie at 226 to 246 (IIGA…ALNK) and 254 to 274 (ITLF…LEPL). The segment at 363 to 384 (GNGPGGNNKPIPNFDPDSKKDR) is disordered. The next 4 membrane-spanning stretches (helical) occupy residues 409–429 (IIIL…LLYF), 436–456 (CMIT…MVLF), 469–489 (VCIS…LLIT), and 562–582 (VVSI…FYYF). The disordered stretch occupies residues 624–674 (SSVHAQGKSPVEDKPDIGSKRKDGVQQGEDSENSSGGELADLASGSGGGKL). Residues 633 to 647 (PVEDKPDIGSKRKDG) show a composition bias toward basic and acidic residues.

It belongs to the TrbL/VirB6 family.

The protein resides in the cell membrane. This is an uncharacterized protein from Rickettsia typhi (strain ATCC VR-144 / Wilmington).